Reading from the N-terminus, the 151-residue chain is MKKIDIKILDKRIGDVFPLPTYTTSGSAGLDLRVCTQAPQHLSPGETRLLPTGLAVHIADPHLAAMILPRSGLGHKNGIVLGNLVGLIDSDYQGELMLSVWNRSQIDFLINPGDRLAQMVFVPVVQVELNIVSEFTSSQRGSGGFGHSGRQ.

Substrate contacts are provided by residues Arg70–Gly72, Asn83, Leu87–Asp89, and Met97.

This sequence belongs to the dUTPase family. Requires Mg(2+) as cofactor.

It carries out the reaction dUTP + H2O = dUMP + diphosphate + H(+). The protein operates within pyrimidine metabolism; dUMP biosynthesis; dUMP from dCTP (dUTP route): step 2/2. This enzyme is involved in nucleotide metabolism: it produces dUMP, the immediate precursor of thymidine nucleotides and it decreases the intracellular concentration of dUTP so that uracil cannot be incorporated into DNA. The polypeptide is Deoxyuridine 5'-triphosphate nucleotidohydrolase (Hamiltonella defensa subsp. Acyrthosiphon pisum (strain 5AT)).